Consider the following 49-residue polypeptide: Light-harvesting protein B-875 beta chain (49 aa).

The Cytoplasmic segment spans residues 2 to 27; it reads ADKSDLGYTGLTDEQAQELHSVYMSG. A bacteriochlorophyll is bound by residues H21 and H39. Residues 28–45 form a helical; Signal-anchor for type II membrane protein membrane-spanning segment; the sequence is LWPFSAVAIVAHLAVYIW. Residues 46-49 are Periplasmic-facing; sequence RPWF.

Belongs to the antenna complex beta subunit family. The core complex is formed by different alpha and beta chains, binding bacteriochlorophyll molecules, and arranged most probably in tetrameric structures disposed around the reaction center. The non-pigmented gamma chains may constitute additional components.

The protein resides in the cell inner membrane. Antenna complexes are light-harvesting systems, which transfer the excitation energy to the reaction centers. This Cereibacter sphaeroides (Rhodobacter sphaeroides) protein is Light-harvesting protein B-875 beta chain (pufB).